The primary structure comprises 1056 residues: Carbamoyl phosphate synthase large chain (1056 aa).

The carboxyphosphate synthetic domain stretch occupies residues 1-398; sequence MPRDPSIKKV…AFLKALRSLD (398 aa). ATP-binding residues include arginine 127, arginine 167, glycine 173, glycine 174, glutamate 206, valine 208, glutamate 213, glycine 239, valine 240, histidine 241, glutamine 282, and glutamate 295. The ATP-grasp 1 domain maps to 131 to 324; it reads RDLMNRIGEP…IARVASKIAI (194 aa). The Mg(2+) site is built by glutamine 282, glutamate 295, and asparagine 297. Residues glutamine 282, glutamate 295, and asparagine 297 each coordinate Mn(2+). The segment at 399–532 is oligomerization domain; the sequence is TDVEHHTVLS…STYGDKVCEV (134 aa). Residues 533–921 form a carbamoyl phosphate synthetic domain region; it reads THSDRKKVMI…YKASIAAHNR (389 aa). Residues 663 to 854 enclose the ATP-grasp 2 domain; sequence SVLLDSLSIP…LAKIAARVMM (192 aa). ATP contacts are provided by arginine 699, arginine 738, leucine 740, glutamate 745, glycine 770, valine 771, histidine 772, serine 773, glutamine 813, and glutamate 825. Residues glutamine 813, glutamate 825, and asparagine 827 each coordinate Mg(2+). Glutamine 813, glutamate 825, and asparagine 827 together coordinate Mn(2+). Residues 920–1056 form the MGS-like domain; sequence NRLPKSGNVF…IEPLQHYIGR (137 aa). Residues 922–1056 form an allosteric domain region; it reads LPKSGNVFIS…IEPLQHYIGR (135 aa).

It belongs to the CarB family. Composed of two chains; the small (or glutamine) chain promotes the hydrolysis of glutamine to ammonia, which is used by the large (or ammonia) chain to synthesize carbamoyl phosphate. Tetramer of heterodimers (alpha,beta)4. The cofactor is Mg(2+). It depends on Mn(2+) as a cofactor.

It carries out the reaction hydrogencarbonate + L-glutamine + 2 ATP + H2O = carbamoyl phosphate + L-glutamate + 2 ADP + phosphate + 2 H(+). It catalyses the reaction hydrogencarbonate + NH4(+) + 2 ATP = carbamoyl phosphate + 2 ADP + phosphate + 2 H(+). It functions in the pathway amino-acid biosynthesis; L-arginine biosynthesis; carbamoyl phosphate from bicarbonate: step 1/1. The protein operates within pyrimidine metabolism; UMP biosynthesis via de novo pathway; (S)-dihydroorotate from bicarbonate: step 1/3. Large subunit of the glutamine-dependent carbamoyl phosphate synthetase (CPSase). CPSase catalyzes the formation of carbamoyl phosphate from the ammonia moiety of glutamine, carbonate, and phosphate donated by ATP, constituting the first step of 2 biosynthetic pathways, one leading to arginine and/or urea and the other to pyrimidine nucleotides. The large subunit (synthetase) binds the substrates ammonia (free or transferred from glutamine from the small subunit), hydrogencarbonate and ATP and carries out an ATP-coupled ligase reaction, activating hydrogencarbonate by forming carboxy phosphate which reacts with ammonia to form carbamoyl phosphate. This is Carbamoyl phosphate synthase large chain from Methanospirillum hungatei JF-1 (strain ATCC 27890 / DSM 864 / NBRC 100397 / JF-1).